Reading from the N-terminus, the 96-residue chain is YcgL domain-containing protein Csal_1462 (96 aa).

Residues 4–88 form the YcgL domain; that stretch reads RLCEIFKSPR…ARESYLLDLY (85 aa).

This Chromohalobacter salexigens (strain ATCC BAA-138 / DSM 3043 / CIP 106854 / NCIMB 13768 / 1H11) protein is YcgL domain-containing protein Csal_1462.